A 262-amino-acid polypeptide reads, in one-letter code: Tryptophan synthase alpha chain (262 aa).

Catalysis depends on proton acceptor residues E48 and D59.

It belongs to the TrpA family. In terms of assembly, tetramer of two alpha and two beta chains.

The catalysed reaction is (1S,2R)-1-C-(indol-3-yl)glycerol 3-phosphate + L-serine = D-glyceraldehyde 3-phosphate + L-tryptophan + H2O. It functions in the pathway amino-acid biosynthesis; L-tryptophan biosynthesis; L-tryptophan from chorismate: step 5/5. In terms of biological role, the alpha subunit is responsible for the aldol cleavage of indoleglycerol phosphate to indole and glyceraldehyde 3-phosphate. The polypeptide is Tryptophan synthase alpha chain (Helicobacter pylori (strain J99 / ATCC 700824) (Campylobacter pylori J99)).